Consider the following 111-residue polypeptide: Ig kappa chain V-III region PC 2413 (111 aa).

Residues 1-23 (DIVLTQSPASLAVSLGQRATISC) are framework-1. Cys23 and Cys92 are disulfide-bonded. Residues 24–38 (RASESVVNYGVSLMH) form a complementarity-determining-1 region. Positions 39–53 (WFQQKPGQPPKLLIY) are framework-2. Residues 54–60 (GASNRGS) are complementarity-determining-2. A framework-3 region spans residues 61–92 (GVPARFSGSGSGTDFSLIIHPMEEDDSAMYFC). Residues 93–101 (HQTKEVPWT) form a complementarity-determining-3 region. The segment at 102 to 111 (FGGGTDLEIE) is framework-4.

The chain is Ig kappa chain V-III region PC 2413 from Mus musculus (Mouse).